Here is a 319-residue protein sequence, read N- to C-terminus: Serine/threonine-protein phosphatase PP1 isozyme 2 (319 aa).

Residues D61, H63, D89, and N121 each coordinate Mn(2+). H122 (proton donor) is an active-site residue. Mn(2+) is bound by residues H170 and H245.

It belongs to the PPP phosphatase family. PP-1 subfamily. The cofactor is Mn(2+).

The enzyme catalyses O-phospho-L-seryl-[protein] + H2O = L-seryl-[protein] + phosphate. It carries out the reaction O-phospho-L-threonyl-[protein] + H2O = L-threonyl-[protein] + phosphate. The sequence is that of Serine/threonine-protein phosphatase PP1 isozyme 2 from Acetabularia peniculus (Green alga).